We begin with the raw amino-acid sequence, 152 residues long: UPF0178 protein SAS0646 (152 aa).

Belongs to the UPF0178 family.

This chain is UPF0178 protein SAS0646, found in Staphylococcus aureus (strain MSSA476).